We begin with the raw amino-acid sequence, 993 residues long: Importin subunit beta-5 (993 aa).

One can recognise an Importin N-terminal domain in the interval 24–100 (AELGLRDLEK…RETLLHLLVS (77 aa)).

The protein localises to the nucleus. Its function is as follows. Required for nuclear protein import and mediates docking of import substrate to distinct nucleoporins. Serves a receptor for nuclear localization signals. Mediates the nuclear import of TATA-binding protein (TBP) and of histones H2A and H2B. In Schizosaccharomyces pombe (strain 972 / ATCC 24843) (Fission yeast), this protein is Importin subunit beta-5 (kap114).